The primary structure comprises 356 residues: GATA zinc finger domain-containing protein 17 (356 aa).

Positions 91-119 (LKEFDALEASLNAELECLELQYSSDTSEL) form a coiled coil. The segment covering 158 to 188 (TASTSTSTPTNTTTTTTTTSNSLTKNNNSAL) has biased composition (low complexity). The interval 158–294 (TASTSTSTPT…DITEESKVKE (137 aa)) is disordered. The span at 206–228 (SSDDEEDDQKDDQDKDDSDEDNV) shows a compositional bias: acidic residues. A compositionally biased stretch (low complexity) spans 260-284 (TAITTTTTPITTTDSNIIGTTTTTD). The GATA-type zinc-finger motif lies at 304 to 331 (CYVCKVTETPYWRRGTDNGVVVDLCNEC).

The protein is GATA zinc finger domain-containing protein 17 (gtaQ) of Dictyostelium discoideum (Social amoeba).